The primary structure comprises 532 residues: CTP synthase (532 aa).

The segment at 1-267 (MTKYIFVTGG…DDIVLEHLQL (267 aa)) is amidoligase domain. Residue Ser-13 coordinates CTP. A UTP-binding site is contributed by Ser-13. 14-19 (SIGKGI) is an ATP binding site. Tyr-54 is an L-glutamine binding site. Asp-71 lines the ATP pocket. Mg(2+) contacts are provided by Asp-71 and Glu-141. Residues 148-150 (DIE), 188-193 (KTKPTQ), and Lys-224 contribute to the CTP site. Residues 188 to 193 (KTKPTQ) and Lys-224 each bind UTP. The Glutamine amidotransferase type-1 domain maps to 292-532 (RIGLVGKYVS…DFVGAALKNK (241 aa)). Residue Gly-354 coordinates L-glutamine. Cys-381 acts as the Nucleophile; for glutamine hydrolysis in catalysis. L-glutamine is bound by residues 382–385 (LGMQ), Glu-405, and Arg-462. Active-site residues include His-507 and Glu-509.

It belongs to the CTP synthase family. In terms of assembly, homotetramer.

It carries out the reaction UTP + L-glutamine + ATP + H2O = CTP + L-glutamate + ADP + phosphate + 2 H(+). The enzyme catalyses L-glutamine + H2O = L-glutamate + NH4(+). The catalysed reaction is UTP + NH4(+) + ATP = CTP + ADP + phosphate + 2 H(+). It participates in pyrimidine metabolism; CTP biosynthesis via de novo pathway; CTP from UDP: step 2/2. With respect to regulation, allosterically activated by GTP, when glutamine is the substrate; GTP has no effect on the reaction when ammonia is the substrate. The allosteric effector GTP functions by stabilizing the protein conformation that binds the tetrahedral intermediate(s) formed during glutamine hydrolysis. Inhibited by the product CTP, via allosteric rather than competitive inhibition. Functionally, catalyzes the ATP-dependent amination of UTP to CTP with either L-glutamine or ammonia as the source of nitrogen. Regulates intracellular CTP levels through interactions with the four ribonucleotide triphosphates. The chain is CTP synthase from Listeria monocytogenes serovar 1/2a (strain ATCC BAA-679 / EGD-e).